Consider the following 288-residue polypeptide: MKGIILAGGSGTRLYPITRGVSKQLLPVYDKPMIYYPLSVLMLAGIRDILVITAPEDNAAFQRLLGDGSDFGIRLQYAVQPSPDGLAQAFIIGEEFIGNGNVCLILGDNIFYGQSFTQTLKQAAAKTHGATVFGYRVKDPERFGVVEFDENFNALSIEEKPQQPKSDWAVTGLYFHDNRAVEFAKQLKPSARGELEISDLNRMYLEDGSLSVQILGRGFAWLDTGTQESLHEAASFVQTVQNIQNLHIACLEEIAWRNGWLTKKDVETRAKHLEKTAYGQYLLHLIGK.

Positions 108 and 223 each coordinate Mg(2+).

Belongs to the glucose-1-phosphate thymidylyltransferase family. In terms of assembly, homotetramer. Mg(2+) is required as a cofactor.

The enzyme catalyses dTTP + alpha-D-glucose 1-phosphate + H(+) = dTDP-alpha-D-glucose + diphosphate. Functionally, catalyzes the formation of dTDP-glucose, from dTTP and glucose 1-phosphate, as well as its pyrophosphorolysis. The protein is Glucose-1-phosphate thymidylyltransferase (rmlA) of Neisseria gonorrhoeae.